Reading from the N-terminus, the 569-residue chain is Santalene synthase (569 aa).

(2E)-geranyl diphosphate is bound by residues Arg-284, Asp-321, Asp-325, and Arg-460. 2 residues coordinate Mg(2+): Asp-321 and Asp-325. Residues 321 to 325 (DDGYD) carry the DDXXD motif motif. Residues Asn-463, Thr-467, and Glu-471 each contribute to the Mg(2+) site.

This sequence belongs to the terpene synthase family. Tpsb subfamily. It depends on Mg(2+) as a cofactor. Mn(2+) is required as a cofactor.

It carries out the reaction (2E,6E)-farnesyl diphosphate = (1S,5S,6R)-alpha-bergamotene + diphosphate. It catalyses the reaction (2E,6E)-farnesyl diphosphate = (+)-alpha-santalene + diphosphate. The catalysed reaction is (2E,6E)-farnesyl diphosphate = (-)-beta-santalene + diphosphate. Functionally, catalyzes a mixture of sesquiterpenoids from (2E,6E)-farnesyl diphosphate in fragrance biosynthesis. Catalyzes the formation of alpha-santalene, beta-santalene, epi-beta-santalene and exo-alpha-bergamotene, as well as traces of alpha-farnesene and beta-farnesene. Also acts with (Z,Z)-farnesyl diphosphate isomer, producing alpha-endo-bergamotene, alpha-santalene, (Z)-beta-farnesene, epi-beta-santalene, and beta-santalene. This chain is Santalene synthase, found in Santalum album (White sandalwood).